The chain runs to 228 residues: Aquaporin Z 2 (228 aa).

2 consecutive transmembrane segments (helical) span residues 9 to 29 (FFGT…AAAF) and 34 to 54 (IGFT…AYAV). Positions 63 to 65 (NPA) match the NPA 1 motif. The next 3 helical transmembrane spans lie at 82–102 (VPYV…LYVI), 129–149 (LVSA…VILG), and 158–178 (GFAP…SIPV). The NPA 2 motif lies at 184-186 (NPA). The helical transmembrane segment at 204-224 (WLFWLAPIVGGAAGAVIWKLF) threads the bilayer.

This sequence belongs to the MIP/aquaporin (TC 1.A.8) family. In terms of assembly, homotetramer.

Its subcellular location is the cell inner membrane. It catalyses the reaction H2O(in) = H2O(out). Channel that permits osmotically driven movement of water in both directions. It is involved in the osmoregulation and in the maintenance of cell turgor during volume expansion in rapidly growing cells. It mediates rapid entry or exit of water in response to abrupt changes in osmolarity. This chain is Aquaporin Z 2, found in Agrobacterium fabrum (strain C58 / ATCC 33970) (Agrobacterium tumefaciens (strain C58)).